The sequence spans 295 residues: Nucleotide-binding protein BH3569 (295 aa).

ATP is bound at residue 14–21 (GMSGAGKT). 65-68 (DLRG) provides a ligand contact to GTP.

The protein belongs to the RapZ-like family.

Its function is as follows. Displays ATPase and GTPase activities. The sequence is that of Nucleotide-binding protein BH3569 from Halalkalibacterium halodurans (strain ATCC BAA-125 / DSM 18197 / FERM 7344 / JCM 9153 / C-125) (Bacillus halodurans).